We begin with the raw amino-acid sequence, 392 residues long: Dual-specificity RNA methyltransferase RlmN (392 aa).

Glu-116 (proton acceptor) is an active-site residue. Residues 122–364 (EEGRGTLCVS…SPIRTPRGED (243 aa)) form the Radical SAM core domain. Cys-129 and Cys-369 are oxidised to a cystine. Residues Cys-136, Cys-140, and Cys-143 each coordinate [4Fe-4S] cluster. Residues 195–196 (GE), Ser-227, 249–251 (SFH), and Asn-326 contribute to the S-adenosyl-L-methionine site. Cys-369 acts as the S-methylcysteine intermediate in catalysis.

It belongs to the radical SAM superfamily. RlmN family. The cofactor is [4Fe-4S] cluster.

The protein localises to the cytoplasm. The enzyme catalyses adenosine(2503) in 23S rRNA + 2 reduced [2Fe-2S]-[ferredoxin] + 2 S-adenosyl-L-methionine = 2-methyladenosine(2503) in 23S rRNA + 5'-deoxyadenosine + L-methionine + 2 oxidized [2Fe-2S]-[ferredoxin] + S-adenosyl-L-homocysteine. The catalysed reaction is adenosine(37) in tRNA + 2 reduced [2Fe-2S]-[ferredoxin] + 2 S-adenosyl-L-methionine = 2-methyladenosine(37) in tRNA + 5'-deoxyadenosine + L-methionine + 2 oxidized [2Fe-2S]-[ferredoxin] + S-adenosyl-L-homocysteine. Specifically methylates position 2 of adenine 2503 in 23S rRNA and position 2 of adenine 37 in tRNAs. m2A2503 modification seems to play a crucial role in the proofreading step occurring at the peptidyl transferase center and thus would serve to optimize ribosomal fidelity. The protein is Dual-specificity RNA methyltransferase RlmN of Cereibacter sphaeroides (strain ATCC 17029 / ATH 2.4.9) (Rhodobacter sphaeroides).